Here is a 276-residue protein sequence, read N- to C-terminus: Dermonecrotic toxin LafSicTox-betaIE2 (276 aa).

The active site involves His5. The Mg(2+) site is built by Glu25 and Asp27. His41 (nucleophile) is an active-site residue. 2 cysteine pairs are disulfide-bonded: Cys45–Cys51 and Cys47–Cys189. Asp85 is a Mg(2+) binding site.

The protein belongs to the arthropod phospholipase D family. Class II subfamily. The cofactor is Mg(2+). Expressed by the venom gland.

It is found in the secreted. It catalyses the reaction an N-(acyl)-sphingosylphosphocholine = an N-(acyl)-sphingosyl-1,3-cyclic phosphate + choline. It carries out the reaction an N-(acyl)-sphingosylphosphoethanolamine = an N-(acyl)-sphingosyl-1,3-cyclic phosphate + ethanolamine. The catalysed reaction is a 1-acyl-sn-glycero-3-phosphocholine = a 1-acyl-sn-glycero-2,3-cyclic phosphate + choline. The enzyme catalyses a 1-acyl-sn-glycero-3-phosphoethanolamine = a 1-acyl-sn-glycero-2,3-cyclic phosphate + ethanolamine. Functionally, dermonecrotic toxins cleave the phosphodiester linkage between the phosphate and headgroup of certain phospholipids (sphingolipid and lysolipid substrates), forming an alcohol (often choline) and a cyclic phosphate. This toxin acts on sphingomyelin (SM). It may also act on ceramide phosphoethanolamine (CPE), lysophosphatidylcholine (LPC) and lysophosphatidylethanolamine (LPE), but not on lysophosphatidylserine (LPS), and lysophosphatidylglycerol (LPG). It acts by transphosphatidylation, releasing exclusively cyclic phosphate products as second products. Induces dermonecrosis, hemolysis, increased vascular permeability, edema, inflammatory response, and platelet aggregation. The chain is Dermonecrotic toxin LafSicTox-betaIE2 from Loxosceles aff. spinulosa (strain GJB-2008) (Recluse spider).